The following is a 237-amino-acid chain: 1-(5-phosphoribosyl)-5-[(5-phosphoribosylamino)methylideneamino] imidazole-4-carboxamide isomerase (237 aa).

The Proton acceptor role is filled by D8. The active-site Proton donor is the D129.

The protein belongs to the HisA/HisF family.

The protein localises to the cytoplasm. The catalysed reaction is 1-(5-phospho-beta-D-ribosyl)-5-[(5-phospho-beta-D-ribosylamino)methylideneamino]imidazole-4-carboxamide = 5-[(5-phospho-1-deoxy-D-ribulos-1-ylimino)methylamino]-1-(5-phospho-beta-D-ribosyl)imidazole-4-carboxamide. It participates in amino-acid biosynthesis; L-histidine biosynthesis; L-histidine from 5-phospho-alpha-D-ribose 1-diphosphate: step 4/9. The protein is 1-(5-phosphoribosyl)-5-[(5-phosphoribosylamino)methylideneamino] imidazole-4-carboxamide isomerase of Clostridium botulinum (strain Alaska E43 / Type E3).